Reading from the N-terminus, the 335-residue chain is Glycerol-3-phosphate dehydrogenase [NAD(P)+] (335 aa).

NADPH is bound by residues Trp11, Arg30, and Lys106. Positions 106, 135, and 137 each coordinate sn-glycerol 3-phosphate. Ala139 is an NADPH binding site. Sn-glycerol 3-phosphate is bound by residues Lys190, Asp243, Ser253, Arg254, and Asn255. Lys190 serves as the catalytic Proton acceptor. Arg254 is a binding site for NADPH. Residues Val278 and Glu280 each contribute to the NADPH site.

Belongs to the NAD-dependent glycerol-3-phosphate dehydrogenase family.

It is found in the cytoplasm. The enzyme catalyses sn-glycerol 3-phosphate + NAD(+) = dihydroxyacetone phosphate + NADH + H(+). It carries out the reaction sn-glycerol 3-phosphate + NADP(+) = dihydroxyacetone phosphate + NADPH + H(+). Its pathway is membrane lipid metabolism; glycerophospholipid metabolism. In terms of biological role, catalyzes the reduction of the glycolytic intermediate dihydroxyacetone phosphate (DHAP) to sn-glycerol 3-phosphate (G3P), the key precursor for phospholipid synthesis. This is Glycerol-3-phosphate dehydrogenase [NAD(P)+] from Paucimonas lemoignei (Pseudomonas lemoignei).